Reading from the N-terminus, the 263-residue chain is Glucosamine-6-phosphate deaminase (263 aa).

Aspartate 67 serves as the catalytic Proton acceptor; for enolization step. Asparagine 136 (for ring-opening step) is an active-site residue. Residue histidine 138 is the Proton acceptor; for ring-opening step of the active site. Residue glutamate 143 is the For ring-opening step of the active site.

This sequence belongs to the glucosamine/galactosamine-6-phosphate isomerase family. NagB subfamily. In terms of assembly, homohexamer.

It carries out the reaction alpha-D-glucosamine 6-phosphate + H2O = beta-D-fructose 6-phosphate + NH4(+). It functions in the pathway amino-sugar metabolism; N-acetylneuraminate degradation; D-fructose 6-phosphate from N-acetylneuraminate: step 5/5. In terms of biological role, catalyzes the reversible isomerization-deamination of glucosamine 6-phosphate (GlcN6P) to form fructose 6-phosphate (Fru6P) and ammonium ion. The chain is Glucosamine-6-phosphate deaminase from Cellvibrio japonicus (strain Ueda107) (Pseudomonas fluorescens subsp. cellulosa).